The following is a 628-amino-acid chain: Basal cell adhesion molecule (628 aa).

Positions 1-31 are cleaved as a signal peptide; the sequence is MEPPDARAGARRAPRLLVLALLLAAPPGSKA. Ig-like V-type domains lie at 32–142 and 150–253; these read EVRL…ARLK and PEVS…RLDG. The Extracellular segment spans residues 32 to 547; sequence EVRLSVPPLV…GTVAPQTSQA (516 aa). Disulfide bonds link Cys53–Cys125, Cys172–Cys237, and Cys291–Cys337. Ig-like C2-type domains lie at 254–355, 355–441, and 448–538; these read PSFS…KTLE, ELRV…RSFR, and PELK…FHFG. 3 N-linked (GlcNAc...) asparagine glycosylation sites follow: Asn321, Asn330, and Asn378. 2 disulfides stabilise this stretch: Cys384–Cys424 and Cys473–Cys522. Residues 548–568 traverse the membrane as a helical segment; sequence GVAVMAVAISVALLLLVVAVF. The Cytoplasmic portion of the chain corresponds to 569-628; that stretch reads YCMRRKGRPGCCQWGEKGSPPPGEPKLSHSGSQRPEQTGLLMGSASGGAKHGSGGFGDEC. The interval 580 to 628 is disordered; it reads CQWGEKGSPPPGEPKLSHSGSQRPEQTGLLMGSASGGAKHGSGGFGDEC. A phosphoserine mark is found at Ser596, Ser598, Ser600, and Ser621. The span at 613–628 shows a compositional bias: gly residues; that stretch reads ASGGAKHGSGGFGDEC.

As to quaternary structure, homodimer. Interacts with ITGA4:ITGB1. Interacts with spectrins SPTA1 and SPTB1. Epinephrine-stimulated phosphorylation of Ser-621 by PKA enhances adhesion to laminin. Ser-621 can also be phosphorylated by AKT1.

It localises to the cell membrane. Functionally, transmembrane glycoprotein that functions as both a receptor and an adhesion molecule playing a crucial role in cell adhesion, motility, migration and invasion. Extracellular domain enables binding to extracellular matrix proteins, such as laminin, integrin and other ligands while its intracellular domain interacts with cytoskeletal proteins like hemoglobin, facilitating cell signal transduction. Serves as a receptor for laminin alpha-5/LAMA5 to promote cell adhesion. Mechanistically, JAK2 induces BCAM phosphorylation and activates its adhesion to laminin by stimulating a Rap1/AKT signaling pathway in the absence of EPOR. This Bos taurus (Bovine) protein is Basal cell adhesion molecule (BCAM).